Reading from the N-terminus, the 152-residue chain is Transcriptional regulator MraZ (152 aa).

SpoVT-AbrB domains follow at residues 5-52 and 81-124; these read ATLV…PLPE and ASEC…DETT.

This sequence belongs to the MraZ family. In terms of assembly, forms oligomers.

The protein localises to the cytoplasm. The protein resides in the nucleoid. In terms of biological role, negatively regulates its own expression and that of the subsequent genes in the proximal part of the division and cell wall (dcw) gene cluster. Acts by binding directly to DNA. May also regulate the expression of genes outside the dcw cluster. The protein is Transcriptional regulator MraZ of Shigella sonnei (strain Ss046).